Reading from the N-terminus, the 237-residue chain is Immunoglobulin superfamily member 6 (237 aa).

Residues 1–27 (MGPVSARRSRLRPEISLILFQVGMVGA) form the signal peptide. Over 28–152 (CTVYVLQPGY…ERLFSKEVRS (125 aa)) the chain is Extracellular. Residues 30-134 (VYVLQPGYLE…ELSPSAKHVG (105 aa)) enclose the Ig-like C2-type domain. Cys-51 and Cys-118 are oxidised to a cystine. The chain crosses the membrane as a helical span at residues 153–173 (FLIVLLALLSVYITGVCVTFI). Residues 174-237 (VLFKSKSNGP…RKALPNPGRA (64 aa)) are Cytoplasmic-facing. The segment covering 215-229 (TSHLPEQEGTDENRK) has biased composition (basic and acidic residues). The tract at residues 215-237 (TSHLPEQEGTDENRKALPNPGRA) is disordered.

Ubiquitous with higher expression in immune tissue.

Its subcellular location is the membrane. The chain is Immunoglobulin superfamily member 6 (Igsf6) from Mus musculus (Mouse).